The primary structure comprises 438 residues: GTPase Obg (438 aa).

In terms of domain architecture, Obg spans 6 to 164; the sequence is AEFVDRVKIF…RWLELELKIL (159 aa). The region spanning 165–335 is the OBG-type G domain; it reads ADVGLVGYPN…LLDRVASIVR (171 aa). Residues 171–178, 196–200, 217–220, 287–290, and 316–318 contribute to the GTP site; these read GYPNVGKS, FTTLV, DIPG, NKID, and SAV. Positions 178 and 198 each coordinate Mg(2+). The 81-residue stretch at 358-438 folds into the OCT domain; sequence VWRKLPERFE…IGNFEFEYRE (81 aa).

Belongs to the TRAFAC class OBG-HflX-like GTPase superfamily. OBG GTPase family. In terms of assembly, monomer. It depends on Mg(2+) as a cofactor.

It localises to the cytoplasm. An essential GTPase which binds GTP, GDP and possibly (p)ppGpp with moderate affinity, with high nucleotide exchange rates and a fairly low GTP hydrolysis rate. Plays a role in control of the cell cycle, stress response, ribosome biogenesis and in those bacteria that undergo differentiation, in morphogenesis control. The protein is GTPase Obg of Thermotoga neapolitana (strain ATCC 49049 / DSM 4359 / NBRC 107923 / NS-E).